Here is a 246-residue protein sequence, read N- to C-terminus: mRNA-decapping protein g5R (246 aa).

Positions 91–239 (KYQKFKKNWL…IIGPAFNFIK (149 aa)) constitute a Nudix hydrolase domain. The short motif at 128–149 (GKPKENESDLACAIREFEEETG) is the Nudix box element. E134 is a binding site for Mg(2+). E143 functions as the Nucleophile in the catalytic mechanism. Mg(2+)-binding residues include E147 and E169.

This sequence belongs to the Nudix hydrolase family. DIPP subfamily. As to quaternary structure, interacts with host RPL23A. Mg(2+) is required as a cofactor. Requires Mn(2+) as cofactor.

It is found in the host rough endoplasmic reticulum. It catalyses the reaction diphospho-myo-inositol polyphosphate + H2O = myo-inositol polyphosphate + phosphate.. In terms of biological role, decapping enzyme required for the removal of the 5'-end m7GpppN cap tethered to viral and host mRNAs to allow their decay in cells. May therefore accelerate viral and cellular mRNA turnover to eliminate competing host mRNAs and allow stage-specific synthesis of viral proteins. Acceleration of the turnover of cellular transcripts may even promote the shutoff of host protein synthesis. In addition to the mRNA cap, g5R also efficiently hydrolyzes diphosphoinositol polyphosphates. Down-regulation of the level of PP-InsP5 (diphosphoinositol pentakisphosphate) may play a role in viral manipulation of the cellular secretory pathway, a step necessary for the formation of virions. Binds viral and cellular poly(A) mRNAs, thereby decreasing both types of mRNAs. The chain is mRNA-decapping protein g5R from African swine fever virus (isolate Pig/Kenya/KEN-50/1950) (ASFV).